The chain runs to 490 residues: Cytochrome P450 2C39 (490 aa).

Residues Met1–Gly25 form the signal peptide. Cys435 contacts heme.

The protein belongs to the cytochrome P450 family. The cofactor is heme. Liver.

The protein resides in the endoplasmic reticulum membrane. The protein localises to the microsome membrane. It catalyses the reaction an organic molecule + reduced [NADPH--hemoprotein reductase] + O2 = an alcohol + oxidized [NADPH--hemoprotein reductase] + H2O + H(+). It carries out the reaction (5Z,8Z,11Z,14Z)-eicosatetraenoate + reduced [NADPH--hemoprotein reductase] + O2 = 11,12-epoxy-(5Z,8Z,14Z)-eicosatrienoate + oxidized [NADPH--hemoprotein reductase] + H2O + H(+). The enzyme catalyses (5Z,8Z,11Z,14Z)-eicosatetraenoate + reduced [NADPH--hemoprotein reductase] + O2 = 14,15-epoxy-(5Z,8Z,11Z)-eicosatrienoate + oxidized [NADPH--hemoprotein reductase] + H2O + H(+). It participates in lipid metabolism; arachidonate metabolism. A cytochrome P450 monooxygenase that primarily catalyzes the epoxidation of 11,12 and 14,15 double bonds of (5Z,8Z,11Z,14Z)-eicosatetraenoic acid (arachidonate) forming 11,12- and 14,15-epoxyeicosatrienoic acids (11,12- and 14,15-EET) regioisomers. Mechanistically, uses molecular oxygen inserting one oxygen atom into a substrate, and reducing the second into a water molecule, with two electrons provided by NADPH via cytochrome P450 reductase (CPR; NADPH--hemoprotein reductase). The polypeptide is Cytochrome P450 2C39 (Mus musculus (Mouse)).